We begin with the raw amino-acid sequence, 103 residues long: Small ribosomal subunit protein uS10 (103 aa).

The protein belongs to the universal ribosomal protein uS10 family. As to quaternary structure, part of the 30S ribosomal subunit.

Its function is as follows. Involved in the binding of tRNA to the ribosomes. The polypeptide is Small ribosomal subunit protein uS10 (Escherichia coli O127:H6 (strain E2348/69 / EPEC)).